The chain runs to 286 residues: Aminoglycoside N(3)-acetyltransferase VIII (286 aa).

It belongs to the antibiotic N-acetyltransferase family.

The enzyme catalyses a 2-deoxystreptamine antibiotic + acetyl-CoA = an N(3)-acetyl-2-deoxystreptamine antibiotic + CoA + H(+). In terms of biological role, resistance to neomycin. In Streptomyces fradiae (Streptomyces roseoflavus), this protein is Aminoglycoside N(3)-acetyltransferase VIII (aacC8).